The chain runs to 394 residues: tRNA-specific 2-thiouridylase MnmA (394 aa).

ATP contacts are provided by residues 30-37 (AMSGGVDS) and Leu56. Cys124 functions as the Nucleophile in the catalytic mechanism. Residues Cys124 and Cys220 are joined by a disulfide bond. Gly148 lines the ATP pocket. The interval 170–172 (RDQ) is interaction with tRNA. The active-site Cysteine persulfide intermediate is the Cys220.

The protein belongs to the MnmA/TRMU family.

The protein localises to the cytoplasm. The enzyme catalyses S-sulfanyl-L-cysteinyl-[protein] + uridine(34) in tRNA + AH2 + ATP = 2-thiouridine(34) in tRNA + L-cysteinyl-[protein] + A + AMP + diphosphate + H(+). Catalyzes the 2-thiolation of uridine at the wobble position (U34) of tRNA, leading to the formation of s(2)U34. In Hyphomonas neptunium (strain ATCC 15444), this protein is tRNA-specific 2-thiouridylase MnmA.